We begin with the raw amino-acid sequence, 597 residues long: Blastula protease 10 (597 aa).

The signal sequence occupies residues 1–16 (MKLILFLSGLVSLVLC). Positions 17–93 (TLAAPTGDQK…DEMTGRKKRK (77 aa)) are cleaved as a propeptide — activation peptide. The segment at 24 to 67 (DQKEIHTETPPPKKPSETTTPGALKTPQPEPKDEEPTPGAFQGD) is disordered. In terms of domain architecture, Peptidase M12A spans 93-294 (KATIYESQRW…ELANLIYECD (202 aa)). 9 cysteine pairs are disulfide-bonded: C134/C293, C162/C182, C299/C315, C305/C317, C319/C328, C339/C365, C392/C412, C484/C510, and C537/C557. H190 serves as a coordination point for Zn(2+). The active site involves E191. H194 and H200 together coordinate Zn(2+). In terms of domain architecture, EGF-like spans 295-329 (DIEDCAGANECLNGGYHDTECNCVCPSGYNGDLCE). CUB domains follow at residues 339 to 449 (CSER…YRIV) and 484 to 595 (CGGS…YRAI).

It depends on Zn(2+) as a cofactor.

The protein localises to the cytoplasm. Its subcellular location is the perinuclear region. It is found in the cell cortex. The protein resides in the secreted. It localises to the extracellular space. In terms of biological role, could be involved in the differentiation of ectodermal lineages and subsequent patterning of the embryo. This chain is Blastula protease 10 (BP10), found in Paracentrotus lividus (Common sea urchin).